The following is a 197-amino-acid chain: Small ribosomal subunit protein uS4c (197 aa).

The region spanning 92–153 is the S4 RNA-binding domain; the sequence is MRLDAVVYRL…APIVEHAKTF (62 aa).

The protein belongs to the universal ribosomal protein uS4 family. In terms of assembly, part of the 30S ribosomal subunit. Contacts protein S5. The interaction surface between S4 and S5 is involved in control of translational fidelity.

Its subcellular location is the plastid. The protein localises to the chloroplast. Its function is as follows. One of the primary rRNA binding proteins, it binds directly to 16S rRNA where it nucleates assembly of the body of the 30S subunit. In terms of biological role, with S5 and S12 plays an important role in translational accuracy. This chain is Small ribosomal subunit protein uS4c (rps4), found in Ostreococcus tauri.